The primary structure comprises 87 residues: U3-theraphotoxin-Hhn1a 12 (87 aa).

Positions Met-1–Ala-24 are cleaved as a signal peptide. The propeptide occupies Ser-25 to Arg-52. 3 disulfides stabilise this stretch: Cys-54/Cys-67, Cys-61/Cys-72, and Cys-66/Cys-79.

It belongs to the neurotoxin 10 (Hwtx-1) family. 51 (Hntx-8) subfamily. Hntx-8 sub-subfamily. Expressed by the venom gland.

The protein localises to the secreted. Functionally, ion channel inhibitor. In Cyriopagopus hainanus (Chinese bird spider), this protein is U3-theraphotoxin-Hhn1a 12.